Consider the following 651-residue polypeptide: MSEKIHPVPKQVKAQALIDKEKYLKWYEESVENPDKFWGKHGKRIDWFKPYTKVKNTSFTGKVSIKWFEDGQTNVSYNCIDRHLKTNGDQVAIIWEGDNPYIDKKITYNELYEHVCRMANVLKKHGVKKGDRVTIYMPMIPEAAYAMLACARIGAVHSVVFGGFSPEALAGRIVDCESTFVITCDEGVRGGKPVPLKDNTDTAIHIAARQHVNVSKVLVVRRTGGKTGWAPGRDLWYHQEVATVKAECPPVKMKAEDPLFILYTSGSTGKPKGVLHTTGGYLVYASMTHEYVFDYHHGDIYWCTADVGWVTGHSYIVYGPLSNCATTLMFEGVPNFPDQGRFWEVIDKHKVNIFYTAPTAIRSLMGAGDDFVTRSSRSSLRLLGTVGEPINPEAWEWYYNVVGDKRCPVIDTWWQTETGGHMITPLPGAIDLKPGSATVPFFGVKPELVDNEGKVLEGAADGNLCIADSWPGQMRTVYGDHERFIQTYFSTYKGKYFTGDGCRRDEDGYYWITGRVDDVLNVSGHRLGTAEVESALVSHNLVSEAAVVGYPHAIKGQGIYCYVTLMAGHEGTDTLRQELVKHVRAEIGPIASPDKIQFAPGLPKTRSGKIMRRILRKIAEDDFGALGDTSTLADPAVVDDLIANRQNKATA.

Residues 189–192 (RGGK), Thr311, and Asn335 contribute to the CoA site. Residues 387–389 (GEP), 411–416 (DTWWQT), Asp500, and Arg515 contribute to the ATP site. Ser523 provides a ligand contact to CoA. An ATP-binding site is contributed by Arg526. Val537, His539, and Val542 together coordinate Mg(2+). Arg584 contributes to the CoA binding site. Residue Lys609 is modified to N6-acetyllysine.

This sequence belongs to the ATP-dependent AMP-binding enzyme family. Mg(2+) is required as a cofactor. In terms of processing, acetylated. Deacetylation by the SIR2-homolog deacetylase activates the enzyme.

The enzyme catalyses acetate + ATP + CoA = acetyl-CoA + AMP + diphosphate. Its function is as follows. Catalyzes the conversion of acetate into acetyl-CoA (AcCoA), an essential intermediate at the junction of anabolic and catabolic pathways. AcsA undergoes a two-step reaction. In the first half reaction, AcsA combines acetate with ATP to form acetyl-adenylate (AcAMP) intermediate. In the second half reaction, it can then transfer the acetyl group from AcAMP to the sulfhydryl group of CoA, forming the product AcCoA. The chain is Acetyl-coenzyme A synthetase from Rhizobium etli (strain ATCC 51251 / DSM 11541 / JCM 21823 / NBRC 15573 / CFN 42).